A 73-amino-acid polypeptide reads, in one-letter code: Adipokinetic prohormone type 2 (73 aa).

An N-terminal signal peptide occupies residues Met1–Gly20. The residue at position 21 (Gln21) is a Pyrrolidone carboxylic acid. Asn30 is subject to Asparagine amide. Residues Ser34–Met73 constitute a propeptide that is removed on maturation.

Expressed in corpora cardiaca (CC), corpora allata (CA) and gnathal ganglion (GNG) (at protein level). Expression in CC and CA detected in all animals, expression in GNG detected in few animals (at protein level). Not expressed in antennal lobe (AL) (at protein level).

It localises to the secreted. In terms of biological role, this hormone, released from cells in the corpora cardiaca, causes release of diglycerides from the fat body and stimulation of muscles to use these diglycerides as an energy source during energy-demanding processes. In Agrotis ipsilon (Black cutworm moth), this protein is Adipokinetic prohormone type 2.